Reading from the N-terminus, the 87-residue chain is uncharacterized protein (87 aa).

It to A.fulgidus AF_1348 and AF_1363.

This is an uncharacterized protein from Archaeoglobus fulgidus (strain ATCC 49558 / DSM 4304 / JCM 9628 / NBRC 100126 / VC-16).